We begin with the raw amino-acid sequence, 157 residues long: GTP-dependent dephospho-CoA kinase (157 aa).

GTP contacts are provided by aspartate 40, aspartate 59, lysine 61, glutamate 107, and aspartate 128.

This sequence belongs to the GTP-dependent DPCK family.

It carries out the reaction 3'-dephospho-CoA + GTP = GDP + CoA + H(+). It participates in cofactor biosynthesis; coenzyme A biosynthesis. Its function is as follows. Catalyzes the GTP-dependent phosphorylation of the 3'-hydroxyl group of dephosphocoenzyme A to form coenzyme A (CoA). This Desulfurococcus amylolyticus (strain DSM 18924 / JCM 16383 / VKM B-2413 / 1221n) (Desulfurococcus kamchatkensis) protein is GTP-dependent dephospho-CoA kinase.